A 346-amino-acid chain; its full sequence is [LysW]-lysine/[LysW]-ornithine hydrolase (346 aa).

H68 is a binding site for Zn(2+). D70 is a catalytic residue. Residue D92 participates in Zn(2+) binding. E122 (proton acceptor) is an active-site residue. Zn(2+) contacts are provided by E123, E146, and H317.

Belongs to the peptidase M20A family. LysK subfamily. Zn(2+) is required as a cofactor. The cofactor is Co(2+).

The protein localises to the cytoplasm. It carries out the reaction [amino-group carrier protein]-C-terminal-gamma-(L-lysyl)-L-glutamate + H2O = [amino-group carrier protein]-C-terminal-L-glutamate + L-lysine. It catalyses the reaction [amino-group carrier protein]-C-terminal-gamma-(L-ornithyl)-L-glutamate + H2O = [amino-group carrier protein]-C-terminal-L-glutamate + L-ornithine. The protein operates within amino-acid biosynthesis; L-lysine biosynthesis via AAA pathway; L-lysine from L-alpha-aminoadipate (Thermus route): step 5/5. It participates in amino-acid biosynthesis; L-arginine biosynthesis. Catalyzes the release of L-lysine from [LysW]-gamma-L-lysine and the release of L-ornithine from [LysW]-L-ornithine. This Saccharolobus islandicus (strain M.16.27) (Sulfolobus islandicus) protein is [LysW]-lysine/[LysW]-ornithine hydrolase.